Consider the following 64-residue polypeptide: Conotoxin Am1.1 (64 aa).

Residues 1–22 form the signal peptide; that stretch reads MSCLPVFVILLLLTASGPSVDA. The propeptide occupies 23–49; the sequence is RLKTKDDVPLSSFRDNAKSTLRRLQDK. Residue Pro-60 is modified to 4-hydroxyproline; partial; in major form.

Belongs to the conotoxin T superfamily. In terms of processing, contains 2 disulfide bonds. As to expression, expressed by the venom duct.

Its subcellular location is the secreted. Probable toxin that inhibits ion channels. The chain is Conotoxin Am1.1 from Conus amadis (Amadis cone).